Reading from the N-terminus, the 89-residue chain is SAP domain-containing new25 (89 aa).

The region spanning Pro44–Leu78 is the SAP domain.

This Schizosaccharomyces pombe (strain 972 / ATCC 24843) (Fission yeast) protein is SAP domain-containing new25 (new25).